The primary structure comprises 699 residues: 1,4-alpha-glucan-branching enzyme (699 aa).

Substrate-binding positions include 59–60 and 88–90; these read NE and WAP. A (1,4-alpha-D-glucosyl)n-binding site is contributed by tryptophan 104. 115–118 contributes to the substrate binding site; it reads DYGK. Lysine 140 contributes to the (1,4-alpha-D-glucosyl)n binding site. Tyrosine 170 is modified (phosphotyrosine). 330–333 is a substrate binding site; it reads EVLR. The active-site Nucleophile is aspartate 354. The active-site Proton donor is glutamate 409.

The protein belongs to the glycosyl hydrolase 13 family. GlgB subfamily. In terms of assembly, monomer.

It catalyses the reaction Transfers a segment of a (1-&gt;4)-alpha-D-glucan chain to a primary hydroxy group in a similar glucan chain.. Its pathway is glycan biosynthesis; glycogen biosynthesis. Its function is as follows. Glycogen-branching enzyme participates in the glycogen biosynthetic process along with glycogenin and glycogen synthase. Generates alpha-1,6-glucosidic branches from alpha-1,4-linked glucose chains, to increase solubility of the glycogen polymer. The protein is 1,4-alpha-glucan-branching enzyme (GBE1) of Equus caballus (Horse).